The chain runs to 204 residues: UPF0134 protein MPN_655 (204 aa).

Residues 46-132 (EVENKPKIPI…FNEFKDSNNQ (87 aa)) form a disordered region. Positions 64-80 (SPKPLKPPKPPKPPKGP) are enriched in pro residues. Over residues 117–132 (YVTRKEFNEFKDSNNQ) the composition is skewed to basic and acidic residues.

Belongs to the UPF0134 family.

The polypeptide is UPF0134 protein MPN_655 (Mycoplasma pneumoniae (strain ATCC 29342 / M129 / Subtype 1) (Mycoplasmoides pneumoniae)).